The chain runs to 273 residues: Shikimate dehydrogenase (NADP(+)) (273 aa).

Residues 15 to 17 and Thr-62 contribute to the shikimate site; that span reads SKS. Lys-66 functions as the Proton acceptor in the catalytic mechanism. Asp-78 contacts NADP(+). Asn-87 and Asp-103 together coordinate shikimate. Residues 127–131, 150–155, Ala-218, and Gly-238 each bind NADP(+); these read GAGGA and NRTHTR.

The protein belongs to the shikimate dehydrogenase family. In terms of assembly, homodimer.

It catalyses the reaction shikimate + NADP(+) = 3-dehydroshikimate + NADPH + H(+). It functions in the pathway metabolic intermediate biosynthesis; chorismate biosynthesis; chorismate from D-erythrose 4-phosphate and phosphoenolpyruvate: step 4/7. Involved in the biosynthesis of the chorismate, which leads to the biosynthesis of aromatic amino acids. Catalyzes the reversible NADPH linked reduction of 3-dehydroshikimate (DHSA) to yield shikimate (SA). This Yersinia pseudotuberculosis serotype O:1b (strain IP 31758) protein is Shikimate dehydrogenase (NADP(+)).